The primary structure comprises 94 residues: Small ribosomal subunit protein bS6 (94 aa).

It belongs to the bacterial ribosomal protein bS6 family.

In terms of biological role, binds together with bS18 to 16S ribosomal RNA. The protein is Small ribosomal subunit protein bS6 of Desulforudis audaxviator (strain MP104C).